A 309-amino-acid polypeptide reads, in one-letter code: Ribosomal RNA small subunit methyltransferase H (309 aa).

Residues 34-36 (GGH), Asp54, Phe80, Asp102, and Gln109 contribute to the S-adenosyl-L-methionine site.

Belongs to the methyltransferase superfamily. RsmH family.

Its subcellular location is the cytoplasm. The enzyme catalyses cytidine(1402) in 16S rRNA + S-adenosyl-L-methionine = N(4)-methylcytidine(1402) in 16S rRNA + S-adenosyl-L-homocysteine + H(+). In terms of biological role, specifically methylates the N4 position of cytidine in position 1402 (C1402) of 16S rRNA. The chain is Ribosomal RNA small subunit methyltransferase H from Cellvibrio japonicus (strain Ueda107) (Pseudomonas fluorescens subsp. cellulosa).